A 310-amino-acid polypeptide reads, in one-letter code: Putative HTH-type transcriptional regulatory protein YN1551_1579 (310 aa).

The HTH cro/C1-type domain maps to 125 to 180 (LKHKREEMGYSIGDVAKFLGVSRKAIYDYEKGDSDVSLEVAEKLIDLFGDDIIGDV). The H-T-H motif DNA-binding region spans 136–155 (IGDVAKFLGVSRKAIYDYEK).

The sequence is that of Putative HTH-type transcriptional regulatory protein YN1551_1579 from Saccharolobus islandicus (strain Y.N.15.51 / Yellowstone #2) (Sulfolobus islandicus).